A 138-amino-acid polypeptide reads, in one-letter code: Prefoldin subunit alpha (138 aa).

This sequence belongs to the prefoldin subunit alpha family. Heterohexamer of two alpha and four beta subunits.

Its subcellular location is the cytoplasm. Its function is as follows. Molecular chaperone capable of stabilizing a range of proteins. Seems to fulfill an ATP-independent, HSP70-like function in archaeal de novo protein folding. This is Prefoldin subunit alpha from Methanococcoides burtonii (strain DSM 6242 / NBRC 107633 / OCM 468 / ACE-M).